A 233-amino-acid chain; its full sequence is Ribosomal RNA small subunit methyltransferase G (233 aa).

S-adenosyl-L-methionine-binding positions include G91, M96, 142–143 (VE), and R157.

It belongs to the methyltransferase superfamily. RNA methyltransferase RsmG family.

It localises to the cytoplasm. It catalyses the reaction guanosine(527) in 16S rRNA + S-adenosyl-L-methionine = N(7)-methylguanosine(527) in 16S rRNA + S-adenosyl-L-homocysteine. Specifically methylates the N7 position of guanine in position 527 of 16S rRNA. The chain is Ribosomal RNA small subunit methyltransferase G from Cupriavidus necator (strain ATCC 17699 / DSM 428 / KCTC 22496 / NCIMB 10442 / H16 / Stanier 337) (Ralstonia eutropha).